Here is a 377-residue protein sequence, read N- to C-terminus: DNA replication and repair protein RecF (377 aa).

30–37 (GPNGVGKT) contacts ATP.

It belongs to the RecF family.

Its subcellular location is the cytoplasm. Its function is as follows. The RecF protein is involved in DNA metabolism; it is required for DNA replication and normal SOS inducibility. RecF binds preferentially to single-stranded, linear DNA. It also seems to bind ATP. The protein is DNA replication and repair protein RecF of Salinispora tropica (strain ATCC BAA-916 / DSM 44818 / JCM 13857 / NBRC 105044 / CNB-440).